A 510-amino-acid polypeptide reads, in one-letter code: Amidophosphoribosyltransferase (510 aa).

The Nucleophile role is filled by Cys-2. A Glutamine amidotransferase type-2 domain is found at 2-239 (CGILGIALAD…PGEAVIIPKD (238 aa)). Mg(2+) is bound by residues Asp-373 and Asp-374.

The protein in the C-terminal section; belongs to the purine/pyrimidine phosphoribosyltransferase family. The cofactor is Mg(2+).

The enzyme catalyses 5-phospho-beta-D-ribosylamine + L-glutamate + diphosphate = 5-phospho-alpha-D-ribose 1-diphosphate + L-glutamine + H2O. It functions in the pathway purine metabolism; IMP biosynthesis via de novo pathway; N(1)-(5-phospho-D-ribosyl)glycinamide from 5-phospho-alpha-D-ribose 1-diphosphate: step 1/2. The polypeptide is Amidophosphoribosyltransferase (ADE4) (Lachancea kluyveri (Yeast)).